Here is a 474-residue protein sequence, read N- to C-terminus: tRNA-2-methylthio-N(6)-dimethylallyladenosine synthase (474 aa).

Residues 3–120 (QKLHIKTWGC…LPEMINQIRG (118 aa)) enclose the MTTase N-terminal domain. [4Fe-4S] cluster is bound by residues C12, C49, C83, C157, C161, and C164. The Radical SAM core domain maps to 143–375 (KAEGPTAFVS…QQRINNQAAK (233 aa)). The TRAM domain maps to 378–441 (RAMLGTEQRV…TNSLRGDVIR (64 aa)).

The protein belongs to the methylthiotransferase family. MiaB subfamily. As to quaternary structure, monomer. [4Fe-4S] cluster serves as cofactor.

Its subcellular location is the cytoplasm. The catalysed reaction is N(6)-dimethylallyladenosine(37) in tRNA + (sulfur carrier)-SH + AH2 + 2 S-adenosyl-L-methionine = 2-methylsulfanyl-N(6)-dimethylallyladenosine(37) in tRNA + (sulfur carrier)-H + 5'-deoxyadenosine + L-methionine + A + S-adenosyl-L-homocysteine + 2 H(+). In terms of biological role, catalyzes the methylthiolation of N6-(dimethylallyl)adenosine (i(6)A), leading to the formation of 2-methylthio-N6-(dimethylallyl)adenosine (ms(2)i(6)A) at position 37 in tRNAs that read codons beginning with uridine. The polypeptide is tRNA-2-methylthio-N(6)-dimethylallyladenosine synthase (Actinobacillus succinogenes (strain ATCC 55618 / DSM 22257 / CCUG 43843 / 130Z)).